The chain runs to 829 residues: Leucine--tRNA ligase (829 aa).

A 'HIGH' region motif is present at residues 40–50 (PYPSGNIHMGH). Positions 594–598 (KMSKS) match the 'KMSKS' region motif. Residue K597 coordinates ATP.

The protein belongs to the class-I aminoacyl-tRNA synthetase family.

The protein localises to the cytoplasm. The enzyme catalyses tRNA(Leu) + L-leucine + ATP = L-leucyl-tRNA(Leu) + AMP + diphosphate. This is Leucine--tRNA ligase from Anaplasma marginale (strain St. Maries).